We begin with the raw amino-acid sequence, 624 residues long: Methyl-accepting chemotaxis protein McpG (624 aa).

A helical transmembrane segment spans residues 11-31; that stretch reads ILLAASLIVILAFSLFTLYND. In terms of domain architecture, Cache spans 36-254; sequence NAIREDLENY…GLPSANWYIG (219 aa). Residues 272-292 traverse the membrane as a helical segment; sequence SAVIATVVAVVIIIGLLGLLI. The region spanning 293–347 is the HAMP domain; sequence RVLMQPLHTMTRAMEDIAEGEGDLTKRLHIHSHDEFGVLGNAFNRFVERIHSSIR. Residues 352–588 enclose the Methyl-accepting transducer domain; it reads ATEQVNEVAL…AINMDINEIN (237 aa).

This sequence belongs to the methyl-accepting chemotaxis (MCP) protein family.

The protein localises to the cell membrane. In terms of biological role, chemotactic-signal transducers respond to changes in the concentration of attractants and repellents in the environment, transduce a signal from the outside to the inside of the cell, and facilitate sensory adaptation through the variation of the level of methylation. McpG is a specific gamma-aminobutyric acid (GABA) chemoreceptor that recognizes GABA over a wide range of environmental conditions. Contributes to attraction to and colonization of plant roots. In Pseudomonas putida (strain ATCC 47054 / DSM 6125 / CFBP 8728 / NCIMB 11950 / KT2440), this protein is Methyl-accepting chemotaxis protein McpG.